The sequence spans 213 residues: Ras-related protein Rab-39B (213 aa).

GTP-binding residues include Ser-17, Gly-20, Lys-21, Ser-22, Cys-23, Ser-37, and Thr-40. Position 22 (Ser-22) interacts with Mg(2+). A switch-I region spans residues 35–43 (QVSDPTVGV). Mg(2+) is bound by residues Thr-40 and Asp-64. Residues Gly-67, His-123, Lys-124, Asp-126, Ala-154, and Arg-155 each contribute to the GTP site. Positions 67–83 (GQERFRSITRAYYRNSV) are switch-II. Ser-201 carries the post-translational modification Phosphoserine. Residues Cys-211 and Cys-213 are each lipidated (S-geranylgeranyl cysteine). Cys-213 bears the Cysteine methyl ester mark.

The protein belongs to the small GTPase superfamily. Rab family. Interacts (GDP-bound) with C9orf72; C9orf72 in complex with SMCR8 acts as a GEF for RAB39B. Interacts (in GTP-bound form) with PICK1 (via PDZ domain); a PICK1 homodimer may allow simultaneous association of RAB39B and GRIA2 to PICK1 which is involved in GRIA2 trafficking. Interacts with isoform c of RASSF1; the interaction is strong. Interacts with isoform a of RASSF1; the interaction is weak. Interacts with the DLG4/PSD-95. Interacts (GTP-bound) with HOPS complex components VPS39 and VPS41. Mg(2+) serves as cofactor. As to expression, highly expressed in the brain.

The protein localises to the cell membrane. It is found in the cytoplasmic vesicle membrane. It localises to the golgi apparatus. Its subcellular location is the cytoplasmic vesicle. The protein resides in the autophagosome membrane. The protein localises to the autolysosome membrane. It carries out the reaction GTP + H2O = GDP + phosphate + H(+). With respect to regulation, regulated by guanine nucleotide exchange factors (GEFs) including C9orf72-SMCR8 complex, which promote the exchange of bound GDP for free GTP. Regulated by GTPase activating proteins (GAPs) which increase the GTP hydrolysis activity. Inhibited by GDP dissociation inhibitors (GDIs). The small GTPases Rab are key regulators of intracellular membrane trafficking, from the formation of transport vesicles to their fusion with membranes. Rabs cycle between an inactive GDP-bound form and an active GTP-bound form that is able to recruit to membranes different sets of downstream effectors directly responsible for vesicle formation, movement, tethering and fusion. RAB39B is involved in autophagy and may function in autophagosome formation. Binds downstream effector PICK1 to ensure selectively GRIA2 exit from the endoplasmic reticulum to the Golgi and to regulate AMPAR composition at the post-synapses and thus synaptic transmission. May regulate the homeostasis of SNCA/alpha-synuclein. This is Ras-related protein Rab-39B from Homo sapiens (Human).